The sequence spans 156 residues: ATP synthase subunit b (156 aa).

A helical membrane pass occupies residues leucine 7–proline 27.

Belongs to the ATPase B chain family. F-type ATPases have 2 components, F(1) - the catalytic core - and F(0) - the membrane proton channel. F(1) has five subunits: alpha(3), beta(3), gamma(1), delta(1), epsilon(1). F(0) has three main subunits: a(1), b(2) and c(10-14). The alpha and beta chains form an alternating ring which encloses part of the gamma chain. F(1) is attached to F(0) by a central stalk formed by the gamma and epsilon chains, while a peripheral stalk is formed by the delta and b chains.

Its subcellular location is the cell inner membrane. Its function is as follows. F(1)F(0) ATP synthase produces ATP from ADP in the presence of a proton or sodium gradient. F-type ATPases consist of two structural domains, F(1) containing the extramembraneous catalytic core and F(0) containing the membrane proton channel, linked together by a central stalk and a peripheral stalk. During catalysis, ATP synthesis in the catalytic domain of F(1) is coupled via a rotary mechanism of the central stalk subunits to proton translocation. In terms of biological role, component of the F(0) channel, it forms part of the peripheral stalk, linking F(1) to F(0). This Shewanella baltica (strain OS155 / ATCC BAA-1091) protein is ATP synthase subunit b.